A 1450-amino-acid polypeptide reads, in one-letter code: Collagen alpha-1(I) chain (1450 aa).

Positions 1-22 are cleaved as a signal peptide; it reads MFSFVDNRLLVLLAACVLLVRA. Residues 23–148 constitute a propeptide, N-terminal propeptide; the sequence is LDQEDIESGL…PPGLGGNFAP (126 aa). Positions 31-90 constitute a VWFC domain; sequence GLCHQEGTTYSDKDVWKPEPCVICVCDNGNIMCDDVTCGDYPVDCPNAEIPFGECCPVCP. The interval 97–1201 is disordered; the sequence is YSEQTGVEGP…EPKSHGDGRY (1105 aa). Positions 106 to 116 are enriched in basic and acidic residues; it reads PKGEVGPKGDR. Positions 130-140 are enriched in pro residues; sequence LPGPPGPPGPP. Gln-149 is modified (pyrrolidone carboxylic acid). Lys-157 is subject to Allysine. Residues 166 to 181 are compositionally biased toward pro residues; that stretch reads PMGPMGPRGPPGPSGS. 8 positions are modified to 4-hydroxyproline: Pro-176, Pro-182, Pro-194, Pro-197, Pro-212, Pro-227, Pro-242, and Pro-248. Low complexity predominate over residues 182–206; the sequence is PGPQGFQGPSGEPGEPGAAGALGPR. Residues 215–229 are compositionally biased toward basic and acidic residues; the sequence is NGDDGESGKPGRPGE. Lys-251 carries the 5-hydroxylysine; alternate modification. O-linked (Gal...) hydroxylysine; alternate glycosylation is present at Lys-251. The segment covering 266 to 292 has biased composition (low complexity); the sequence is NGPAGPKGEPGNPGENGAPGQAGPRGL. 17 positions are modified to 4-hydroxyproline: Pro-275, Pro-278, Pro-284, Pro-293, Pro-299, Pro-314, Pro-320, Pro-329, Pro-332, Pro-359, Pro-362, Pro-374, Pro-380, Pro-389, Pro-395, Pro-398, and Pro-413. Residues 317–331 show a composition bias toward pro residues; it reads AGPPGPTGPTGPPGF. A compositionally biased stretch (low complexity) spans 352–374; that stretch reads PQGARGEPGAPGPAGAAGPSGNP. Residues 378–387 are compositionally biased toward gly residues; the sequence is GQPGGKGATG. The span at 388–443 shows a compositional bias: low complexity; sequence SPGIAGAPGFPGARGAPGPQGPAGAPGPKGNNGEPGAQGNKGEPGAKGEPGPAGVQ. Lys-416 bears the 5-hydroxylysine mark. 4-hydroxyproline is present on residues Pro-422, Pro-437, Pro-446, Pro-461, Pro-467, Pro-476, and Pro-482. Over residues 471–480 the composition is skewed to gly residues; sequence GERGGPGSRG. Lys-491 is modified (5-hydroxylysine). 16 positions are modified to 4-hydroxyproline: Pro-494, Pro-515, Pro-521, Pro-530, Pro-533, Pro-551, Pro-569, Pro-578, Pro-590, Pro-608, Pro-626, Pro-632, Pro-644, Pro-650, Pro-656, and Pro-668. 2 stretches are compositionally biased toward low complexity: residues 568 to 578 and 586 to 596; these read FPGPKGAAGEP and VAGPPGATGAP. Positions 637-650 are enriched in low complexity; that stretch reads PAGEAGKPGEQGAP. Residues 669 to 678 show a composition bias toward gly residues; the sequence is GERGGQGPAG. Over residues 679–701 the composition is skewed to low complexity; sequence AQGPRGSPGSPGNDGAKGEAGAA. Residues Pro-689, Pro-704, Pro-710, Pro-716, and Pro-725 each carry the 4-hydroxyproline modification. Over residues 702 to 711 the composition is skewed to gly residues; that stretch reads GAPGGRGPPG. Position 737 is a 5-hydroxylysine (Lys-737). 4-hydroxyproline is present on residues Pro-743, Pro-758, Pro-764, Pro-785, Pro-791, Pro-794, Pro-803, Pro-809, Pro-827, Pro-836, and Pro-845. Residues 796-806 are compositionally biased toward low complexity; sequence PAGICGPPGAD. Low complexity predominate over residues 817-869; sequence DAGPKGDAGAPGPAGPTGAPGPAGNVGAPGPKGTRGAAGPPGATGFPGAAGRL. Residue Lys-848 is modified to 5-hydroxylysine. 2 positions are modified to 4-hydroxyproline: Pro-857 and Pro-863. Pro-871 carries the 3-hydroxyproline modification. 4-hydroxyproline occurs at positions 872, 881, 884, 908, 914, 923, 932, 950, 962, 968, 983, 989, 995, 1004, and 1010. The segment covering 917–943 has biased composition (low complexity); the sequence is SGEKGSPGSDGPAGAPGIPGPQGIAGQ. The segment covering 982 to 997 has biased composition (pro residues); the sequence is PPGPSGPPGLGGPPGE. Lys-1019 carries the 5-hydroxylysine modification. The segment covering 1028–1043 has biased composition (pro residues); it reads SGPPGAPGAPGAPGPV. 4-hydroxyproline occurs at positions 1031, 1034, and 1037. A compositionally biased stretch (low complexity) spans 1064-1078; the sequence is AGPSGVRGAPGPAGA. The segment covering 1079 to 1093 has biased composition (basic and acidic residues); that stretch reads RGDKGEAGEQGERGM. 5-hydroxylysine is present on Lys-1082. Lys-1094 is subject to 5-hydroxylysine; alternate. Lys-1094 carries O-linked (Gal...) hydroxylysine; alternate glycosylation. 2 positions are modified to 4-hydroxyproline: Pro-1106 and Pro-1109. Over residues 1120–1129 the composition is skewed to pro residues; it reads PSGPAGPRGP. Residues Pro-1130 and Pro-1145 each carry the 4-hydroxyproline modification. Residues 1130 to 1145 show a composition bias toward low complexity; that stretch reads PGSSGSTGKDGVNGLP. Pro-1150 is subject to 3-hydroxyproline. Pro-1151 is modified (4-hydroxyproline). Pro residues predominate over residues 1163-1178; it reads AGPPGPPGPPGPPGPP. A 3-hydroxyproline modification is found at Pro-1165. Position 1166 is a 4-hydroxyproline (Pro-1166). Residue Pro-1168 is modified to 3-hydroxyproline. Pro-1169 is modified (4-hydroxyproline). 3-hydroxyproline is present on Pro-1171. A 4-hydroxyproline mark is found at Pro-1172, Pro-1175, and Pro-1178. Residue Lys-1194 is modified to Allysine. Residues 1205 to 1450 constitute a propeptide, C-terminal propeptide; the sequence is DDANVVRDRD…GIDIGPVCFL (246 aa). The Fibrillar collagen NC1 domain maps to 1215–1450; the sequence is LEVDTTLKSL…GIDIGPVCFL (236 aa). Disulfide bonds link Cys-1245-Cys-1277, Cys-1285-Cys-1448, and Cys-1356-Cys-1401. Residues Asp-1263, Asn-1265, Gln-1266, Cys-1268, and Asp-1271 each coordinate Ca(2+). A glycan (N-linked (GlcNAc...) asparagine) is linked at Asn-1351.

Belongs to the fibrillar collagen family. In terms of assembly, trimers of one alpha 2(I) and two alpha 1(I) chains. Post-translationally, contains mostly 4-hydroxyproline. Proline residues at the third position of the tripeptide repeating unit (G-X-Y) are hydroxylated in some or all of the chains. Contains 3-hydroxyproline at a few sites. This modification occurs on the first proline residue in the sequence motif Gly-Pro-Hyp, where Hyp is 4-hydroxyproline. In terms of processing, lysine residues at the third position of the tripeptide repeating unit (G-X-Y) are 5-hydroxylated in some or all of the chains. Post-translationally, O-glycosylated on hydroxylated lysine residues. The O-linked glycan consists of a Glc-Gal disaccharide.

The protein localises to the secreted. It is found in the extracellular space. Its subcellular location is the extracellular matrix. Type I collagen is a member of group I collagen (fibrillar forming collagen). The polypeptide is Collagen alpha-1(I) chain (COL1A1) (Cynops pyrrhogaster (Japanese fire-bellied newt)).